We begin with the raw amino-acid sequence, 731 residues long: 1,4-alpha-glucan branching enzyme GlgB (731 aa).

Asp409 acts as the Nucleophile in catalysis. Glu462 acts as the Proton donor in catalysis.

This sequence belongs to the glycosyl hydrolase 13 family. GlgB subfamily. Monomer.

It carries out the reaction Transfers a segment of a (1-&gt;4)-alpha-D-glucan chain to a primary hydroxy group in a similar glucan chain.. It participates in glycan biosynthesis; glycogen biosynthesis. In terms of biological role, catalyzes the formation of the alpha-1,6-glucosidic linkages in glycogen by scission of a 1,4-alpha-linked oligosaccharide from growing alpha-1,4-glucan chains and the subsequent attachment of the oligosaccharide to the alpha-1,6 position. The polypeptide is 1,4-alpha-glucan branching enzyme GlgB (Roseobacter denitrificans (strain ATCC 33942 / OCh 114) (Erythrobacter sp. (strain OCh 114))).